A 156-amino-acid chain; its full sequence is Ribosomal RNA large subunit methyltransferase H (156 aa).

Residues Leu-73, Gly-104, and 123–128 (ISSMTL) contribute to the S-adenosyl-L-methionine site.

Belongs to the RNA methyltransferase RlmH family. As to quaternary structure, homodimer.

Its subcellular location is the cytoplasm. It carries out the reaction pseudouridine(1915) in 23S rRNA + S-adenosyl-L-methionine = N(3)-methylpseudouridine(1915) in 23S rRNA + S-adenosyl-L-homocysteine + H(+). Its function is as follows. Specifically methylates the pseudouridine at position 1915 (m3Psi1915) in 23S rRNA. This is Ribosomal RNA large subunit methyltransferase H from Janthinobacterium sp. (strain Marseille) (Minibacterium massiliensis).